The primary structure comprises 77 residues: Acyl carrier protein (77 aa).

Residues 2–77 (SSIDKRIKEI…DAIDYITDHT (76 aa)) enclose the Carrier domain. Serine 37 is modified (O-(pantetheine 4'-phosphoryl)serine).

Belongs to the acyl carrier protein (ACP) family. In terms of processing, 4'-phosphopantetheine is transferred from CoA to a specific serine of apo-ACP by AcpS. This modification is essential for activity because fatty acids are bound in thioester linkage to the sulfhydryl of the prosthetic group.

The protein resides in the cytoplasm. It participates in lipid metabolism; fatty acid biosynthesis. In terms of biological role, carrier of the growing fatty acid chain in fatty acid biosynthesis. The sequence is that of Acyl carrier protein from Geotalea daltonii (strain DSM 22248 / JCM 15807 / FRC-32) (Geobacter daltonii).